Reading from the N-terminus, the 786-residue chain is MIFTKSLINPFVHLSAIPTQRIYKTLNDIGLEVDSFHSLRAPDRVVVGKVLECEKHPDADKLNVCQVDIGEERRQIVCGAKNVAAGQWVAVALEGAKISDTLTIKKAKLRGIESQGMICSSSELGFPKLNEGIMILDSSIGELKLGKPLHEYPLFSDDIFEIDITPNRGDCLSLYGVARELAAAYDLDFSEYPKEQEEDNVLGIGRLLQVSHEGKLDSSLLYKTVQLNELKLPLSIALTLAYNDLLGESVLQNFIQYATLVSGVSIKAYRHDACLPASTSDEKPLKASIMIKKDENGLESVYAGEKKLSTIGVSQNRETMPLDAPEVVILEASYTPPAIISEGVARSKVEKETRFFYRASRGSNPHLPSGITLLCSALHKMGGALIYSGTHEITQNYKPATITVDLHSLSAFIGQEVPKTKVVSLLKSLKFEVDLASDDSFLAIRPPLFRHDIHNKQDIAEEIVRLLGIDTILAKPLYFAEKRRTDEEYILYKHHRSLAKRAMVAGFNETIHFVFNQKSRLKEWGYTTIDESVDLLNPITSELDTLRPTLLLSLLDSVVRNKNLGYSQIALFEMGSTYTAARQERFSLAFVASGLKKEAIYPYPKGEKWSLFGFAEEIASVIGEFSLEQRAPQSEKLFHPAQCAYIIQKGERIGTIAKLHPLAQEAFDLEETFVAEIDLEALKPSLIQAQSFSKFPKLQRDLTVLIGKNHPFSALRQEIKKLGIIEIKELFPLDIYTDEKIDEEQISLTIRLLIQSDSKTLEEEEIVSITQKVLDLLNHRFGAKLR.

A tRNA-binding domain is found at 39 to 150 (LRAPDRVVVG…GELKLGKPLH (112 aa)). The B5 domain occupies 397-474 (YKPATITVDL…RLLGIDTILA (78 aa)). Mg(2+)-binding residues include Asp-452, Asp-458, Glu-461, and Glu-462. In terms of domain architecture, FDX-ACB spans 693–786 (SKFPKLQRDL…LNHRFGAKLR (94 aa)).

It belongs to the phenylalanyl-tRNA synthetase beta subunit family. Type 1 subfamily. In terms of assembly, tetramer of two alpha and two beta subunits. It depends on Mg(2+) as a cofactor.

The protein localises to the cytoplasm. The enzyme catalyses tRNA(Phe) + L-phenylalanine + ATP = L-phenylalanyl-tRNA(Phe) + AMP + diphosphate + H(+). This chain is Phenylalanine--tRNA ligase beta subunit, found in Wolinella succinogenes (strain ATCC 29543 / DSM 1740 / CCUG 13145 / JCM 31913 / LMG 7466 / NCTC 11488 / FDC 602W) (Vibrio succinogenes).